Reading from the N-terminus, the 215-residue chain is N-(5'-phosphoribosyl)anthranilate isomerase (215 aa).

This sequence belongs to the TrpF family.

It carries out the reaction N-(5-phospho-beta-D-ribosyl)anthranilate = 1-(2-carboxyphenylamino)-1-deoxy-D-ribulose 5-phosphate. Its pathway is amino-acid biosynthesis; L-tryptophan biosynthesis; L-tryptophan from chorismate: step 3/5. This Paramagnetospirillum magneticum (strain ATCC 700264 / AMB-1) (Magnetospirillum magneticum) protein is N-(5'-phosphoribosyl)anthranilate isomerase.